The primary structure comprises 213 residues: Pyridoxine/pyridoxamine 5'-phosphate oxidase (213 aa).

FMN-binding positions include 57–62 (RIVLLR), 77–78 (FT), Arg-83, Lys-84, and Gln-106. Residue Arg-62 participates in substrate binding. 3 residues coordinate substrate: Tyr-124, Arg-128, and Ser-132. Residues 135–163 (GARASDQSRPLPDRKTLQKRVEEEEARYP) are disordered. An FMN-binding site is contributed by 141 to 142 (QS). Residues 145–163 (LPDRKTLQKRVEEEEARYP) are compositionally biased toward basic and acidic residues. Trp-186 is a binding site for FMN. 192–194 (RLH) is a substrate binding site. Residue Arg-196 participates in FMN binding.

This sequence belongs to the pyridoxamine 5'-phosphate oxidase family. In terms of assembly, homodimer. Requires FMN as cofactor.

It carries out the reaction pyridoxamine 5'-phosphate + O2 + H2O = pyridoxal 5'-phosphate + H2O2 + NH4(+). The enzyme catalyses pyridoxine 5'-phosphate + O2 = pyridoxal 5'-phosphate + H2O2. Its pathway is cofactor metabolism; pyridoxal 5'-phosphate salvage; pyridoxal 5'-phosphate from pyridoxamine 5'-phosphate: step 1/1. It participates in cofactor metabolism; pyridoxal 5'-phosphate salvage; pyridoxal 5'-phosphate from pyridoxine 5'-phosphate: step 1/1. Catalyzes the oxidation of either pyridoxine 5'-phosphate (PNP) or pyridoxamine 5'-phosphate (PMP) into pyridoxal 5'-phosphate (PLP). This chain is Pyridoxine/pyridoxamine 5'-phosphate oxidase, found in Granulibacter bethesdensis (strain ATCC BAA-1260 / CGDNIH1).